A 608-amino-acid chain; its full sequence is Nuclear protein localization protein 4 homolog (608 aa).

The residue at position 2 (A2) is an N-acetylalanine. An N6-acetyllysine modification is found at K179. The MPN domain maps to 226-363 (IMFENHTVAD…MCRLSPDGHF (138 aa)). The RanBP2-type zinc finger occupies 580-608 (TAAMWACQHCTFMNQPGTGHCEMCSLPRT).

This sequence belongs to the NPL4 family. Heterodimer with UFD1. The heterodimer binds ubiquitinated proteins. The heterodimer binds to VCP and inhibits Golgi membrane fusion. Interacts with ZFAND2B; probably through VCP. As to expression, expressed at highest levels in brain, heart, skeletal muscle, kidney and fetal liver.

The protein localises to the cytoplasm. It localises to the cytosol. Its subcellular location is the endoplasmic reticulum. The protein resides in the nucleus. Its pathway is protein degradation; proteasomal ubiquitin-dependent pathway. The ternary complex containing UFD1, VCP and NPLOC4 binds ubiquitinated proteins and is necessary for the export of misfolded proteins from the ER to the cytoplasm, where they are degraded by the proteasome. The NPLOC4-UFD1-VCP complex regulates spindle disassembly at the end of mitosis and is necessary for the formation of a closed nuclear envelope. Acts as a negative regulator of type I interferon production via the complex formed with VCP and UFD1, which binds to RIGI and recruits RNF125 to promote ubiquitination and degradation of RIGI. This is Nuclear protein localization protein 4 homolog (NPLOC4) from Homo sapiens (Human).